We begin with the raw amino-acid sequence, 226 residues long: MTTPNPGQRLGLLGRKVGMMRIFTDDGDAVPVTVLDVSNNRVAQIKTVETDGYSAVQVAFGARKASRVTKPEAGHLAKAGVESGELLQEFRVSAEVAAECKPGSQLPIAMFQAGQQVDVQGTTIGKGFAGTIKRHHFGSQRASHGNSRSHNVPGSISMAQDPGRVFPGKKMSGHLGDDTVTTQNLDVVRVDEARQLLLVKGAVPGAKGGFVTVRPAVKVKLKKGAN.

Gln-160 is subject to N5-methylglutamine.

The protein belongs to the universal ribosomal protein uL3 family. Part of the 50S ribosomal subunit. Forms a cluster with proteins L14 and L19. In terms of processing, methylated by PrmB.

In terms of biological role, one of the primary rRNA binding proteins, it binds directly near the 3'-end of the 23S rRNA, where it nucleates assembly of the 50S subunit. The protein is Large ribosomal subunit protein uL3 of Leptothrix cholodnii (strain ATCC 51168 / LMG 8142 / SP-6) (Leptothrix discophora (strain SP-6)).